Here is a 441-residue protein sequence, read N- to C-terminus: Acetyltransferase TRI7 (441 aa).

7 helical membrane passes run 14–34, 75–95, 158–178, 306–326, 336–356, 377–397, and 421–441; these read GILY…LIII, SLTL…LVLT, IWFI…LDII, IAFV…FCWG, LAFF…QALC, LVGY…YLYH, and TATM…GIEV.

This sequence belongs to the wax synthase family.

Its subcellular location is the membrane. It functions in the pathway sesquiterpene biosynthesis; trichothecene biosynthesis. Its function is as follows. Acetyltransferase; part of the core gene cluster that mediates the biosynthesis of trichothecenes, a very large family of chemically related bicyclic sesquiterpene compounds acting as mycotoxins, including T2-toxin. The biosynthesis of trichothecenes begins with the cyclization of farnesyl diphosphate to trichodiene and is catalyzed by the trichodiene synthase TRI5. Trichodiene undergoes a series of oxygenations catalyzed by the cytochrome P450 monooxygenase TRI4. TRI4 controls the addition of four oxygens at C-2, C-3, C-11, and the C-12, C-13-epoxide to form the intermediate isotrichotriol. Isotrichotriol then undergoes a non-enzymatic isomerization and cyclization to form isotrichodermol. During this process, the oxygen at the C-2 position becomes the pyran ring oxygen and the hydroxyl group at C-11 is lost. More complex type A trichothecenes are built by modifying isotrichodermol through a series of paired hydroxylation and acetylation or acylation steps. Isotrichodermol is converted to isotrichodermin by the acetyltransferase TRI101. TRI101 encodes a C-3 transacetylase that acts as a self-protection or resistance factor during biosynthesis and that the presence of a free C-3 hydroxyl group is a key component of Fusarium trichothecene phytotoxicity. A second hydroxyl group is added to C-15 by the trichothecene C-15 hydroxylase TRI11, producing 15-decalonectrin, which is then acetylated by TRI3, producing calonectrin. A third hydroxyl group is added at C-4 by the cytochrome P450 monooxygenase TRI13, converting calonectrin to 3,15-diacetoxyspirpenol, which is subsequently acetylated by the acetyltransferase TRI7. A fourth hydroxyl group is added to C-8 by the cytochrome P450 monooxygenase TRI1, followed by the addition of an isovaleryl moiety by TRI16. Finally, the acetyl group is removed from the C-3 position by the trichothecene C-3 esterase TRI8 to produce T-2 toxin. The protein is Acetyltransferase TRI7 of Fusarium sporotrichioides.